The primary structure comprises 469 residues: UDP-N-acetylmuramate--L-alanine ligase (469 aa).

An ATP-binding site is contributed by 113–119 (GTHGKTT).

Belongs to the MurCDEF family.

It is found in the cytoplasm. It carries out the reaction UDP-N-acetyl-alpha-D-muramate + L-alanine + ATP = UDP-N-acetyl-alpha-D-muramoyl-L-alanine + ADP + phosphate + H(+). It functions in the pathway cell wall biogenesis; peptidoglycan biosynthesis. Cell wall formation. The polypeptide is UDP-N-acetylmuramate--L-alanine ligase (Neisseria meningitidis serogroup A / serotype 4A (strain DSM 15465 / Z2491)).